The primary structure comprises 480 residues: 2-phosphoxylose phosphatase 1 (480 aa).

Residues Met1–Arg6 are Cytoplasmic-facing. Residues Phe7–Phe27 form a helical; Signal-anchor for type II membrane protein membrane-spanning segment. Topologically, residues His28–Phe480 are lumenal. His97 functions as the Nucleophile in the catalytic mechanism. Residues Asn305 and Asn354 are each glycosylated (N-linked (GlcNAc...) asparagine). Asp379 acts as the Proton donor in catalysis.

This sequence belongs to the histidine acid phosphatase family. As to quaternary structure, interacts with B3GAT3; the interaction increases the 2-phosphoxylose phosphatase activity of PXYLP1 during completion of linkage region formation in a B3GAT3-mediated manner. In terms of tissue distribution, widely expressed. Strongly expressed in spleen, fetal liver, moderately in placenta, pancreas, kidney, thymus and colon.

The protein localises to the golgi apparatus membrane. It carries out the reaction 3-O-[beta-D-GlcA-(1-&gt;3)-beta-D-Gal-(1-&gt;3)-beta-D-Gal-(1-&gt;4)-beta-D-2-O-P-Xyl]-L-seryl-[protein] + H2O = 3-O-(beta-D-GlcA-(1-&gt;3)-beta-D-Gal-(1-&gt;3)-beta-D-Gal-(1-&gt;4)-beta-D-Xyl)-L-seryl-[protein] + phosphate. In terms of biological role, responsible for the 2-O-dephosphorylation of xylose in the glycosaminoglycan-protein linkage region of proteoglycans thereby regulating the amount of mature glycosaminoglycan (GAG) chains. Sulfated glycosaminoglycans (GAGs), including heparan sulfate and chondroitin sulfate, are synthesized on the so-called common GAG-protein linkage region (GlcUAbeta1-3Galbeta1-3Galbeta1-4Xylbeta1-O-Ser) of core proteins, which is formed by the stepwise addition of monosaccharide residues by the respective specific glycosyltransferases. Xylose 2-O-dephosphorylation during completion of linkage region formation is a prerequisite for the initiation and efficient elongation of the repeating disaccharide region of GAG chains. The polypeptide is 2-phosphoxylose phosphatase 1 (Homo sapiens (Human)).